Consider the following 220-residue polypeptide: Adenylate kinase (220 aa).

10 to 15 contacts ATP; the sequence is GAGKGT. The tract at residues 30 to 59 is NMP; that stretch reads STGDMLRAAVKAGSPLGVEAKGYMDAGKLV. Residues T31, R36, 57–59, 85–88, and Q92 contribute to the AMP site; these read KLV and GFPR. Positions 122–159 are LID; that stretch reads GRRTHPASGRTYHVKFNPPKVEGKDDVTGEPLIQRDDD. ATP contacts are provided by residues R123 and 132 to 133; that span reads TY. Positions 156 and 167 each coordinate AMP. G206 is a binding site for ATP.

The protein belongs to the adenylate kinase family. Monomer.

Its subcellular location is the cytoplasm. The enzyme catalyses AMP + ATP = 2 ADP. The protein operates within purine metabolism; AMP biosynthesis via salvage pathway; AMP from ADP: step 1/1. Catalyzes the reversible transfer of the terminal phosphate group between ATP and AMP. Plays an important role in cellular energy homeostasis and in adenine nucleotide metabolism. The polypeptide is Adenylate kinase (Burkholderia ambifaria (strain ATCC BAA-244 / DSM 16087 / CCUG 44356 / LMG 19182 / AMMD) (Burkholderia cepacia (strain AMMD))).